The sequence spans 494 residues: Ubiquitin carboxyl-terminal hydrolase 14 (494 aa).

Residues 4 to 80 enclose the Ubiquitin-like domain; the sequence is YSVTVKWGKE…MMGSADALPE (77 aa). Phosphothreonine is present on threonine 52. In terms of domain architecture, USP spans 105–483; the sequence is CGLTNLGNTC…IAYVLLYGPR (379 aa). Residue cysteine 114 is the Nucleophile of the active site. Serine 143 and serine 148 each carry phosphoserine. Threonine 235 is modified (phosphothreonine). Phosphoserine is present on residues serine 237, serine 302, and serine 432. Histidine 435 functions as the Proton acceptor in the catalytic mechanism. An N6-acetyllysine modification is found at lysine 449.

This sequence belongs to the peptidase C19 family. USP14/UBP6 subfamily. Homodimer (Potential). Associates with the 26S proteasome. Interacts with FANCC, CXCR4 and ERN1. Interacts with TRIM14; this interaction recruits USP14 to cleave ubiquitin chains of CGAS and KDM4D.

The protein localises to the cytoplasm. The protein resides in the cell membrane. It carries out the reaction Thiol-dependent hydrolysis of ester, thioester, amide, peptide and isopeptide bonds formed by the C-terminal Gly of ubiquitin (a 76-residue protein attached to proteins as an intracellular targeting signal).. Functionally, proteasome-associated deubiquitinase which releases ubiquitin from the proteasome targeted ubiquitinated proteins. Ensures the regeneration of ubiquitin at the proteasome. Is a reversibly associated subunit of the proteasome and a large fraction of proteasome-free protein exists within the cell. Required for the degradation of the chemokine receptor CXCR4 which is critical for CXCL12-induced cell chemotaxis. Also serves as a physiological inhibitor of endoplasmic reticulum-associated degradation (ERAD) under the non-stressed condition by inhibiting the degradation of unfolded endoplasmic reticulum proteins via interaction with ERN1. Indispensable for synaptic development and function at neuromuscular junctions (NMJs). Plays a role in the innate immune defense against viruses by stabilizing the viral DNA sensor CGAS and thus inhibiting its autophagic degradation. Inhibits OPTN-mediated selective autophagic degradation of KDM4D and thereby negatively regulates H3K9me2 and H3K9me3. The polypeptide is Ubiquitin carboxyl-terminal hydrolase 14 (USP14) (Homo sapiens (Human)).